A 122-amino-acid polypeptide reads, in one-letter code: UPF0102 protein CPR_1677 (122 aa).

Belongs to the UPF0102 family.

This chain is UPF0102 protein CPR_1677, found in Clostridium perfringens (strain SM101 / Type A).